We begin with the raw amino-acid sequence, 247 residues long: GTP cyclohydrolase 1 type 2 homolog (247 aa).

Residues His-63, His-64, Asp-101, His-215, and Glu-219 each coordinate a divalent metal cation.

It belongs to the GTP cyclohydrolase I type 2/NIF3 family. In terms of assembly, homohexamer.

The sequence is that of GTP cyclohydrolase 1 type 2 homolog from Buchnera aphidicola subsp. Baizongia pistaciae (strain Bp).